The sequence spans 144 residues: Maximins 3/H11 type 2 (144 aa).

A signal peptide spans 1 to 18 (MHFKYIVAVSFLIASAYA). 2 consecutive propeptides follow at residues 19-43 (RSVQ…REIR) and 73-122 (RTAE…KKEK). I143 is modified (isoleucine amide).

This sequence belongs to the bombinin family. Expressed by the skin glands.

The protein resides in the secreted. In terms of biological role, maximin-3 shows antibacterial activity against both Gram-positive and Gram-negative bacteria. It also shows antimicrobial activity against the fungus C.albicans, but not against A.flavus nor P.uticale. It has little hemolytic activity. It possess a significant cytotoxicity against tumor cell lines. It possess a significant anti-HIV activity. It shows high spermicidal activity. Functionally, maximin-H11 shows antimicrobial activity against bacteria and against the fungus C.albicans. Shows strong hemolytic activity. This is Maximins 3/H11 type 2 from Bombina maxima (Giant fire-bellied toad).